The chain runs to 609 residues: Arginine--tRNA ligase (609 aa).

Positions 114 to 124 (VNPNKELHVGH) match the 'HIGH' region motif.

This sequence belongs to the class-I aminoacyl-tRNA synthetase family. As to quaternary structure, monomer.

Its subcellular location is the cytoplasm. It catalyses the reaction tRNA(Arg) + L-arginine + ATP = L-arginyl-tRNA(Arg) + AMP + diphosphate. This chain is Arginine--tRNA ligase, found in Deinococcus radiodurans (strain ATCC 13939 / DSM 20539 / JCM 16871 / CCUG 27074 / LMG 4051 / NBRC 15346 / NCIMB 9279 / VKM B-1422 / R1).